Here is a 140-residue protein sequence, read N- to C-terminus: Large ribosomal subunit protein uL16c (140 aa).

This sequence belongs to the universal ribosomal protein uL16 family. As to quaternary structure, part of the 50S ribosomal subunit.

It is found in the plastid. The protein resides in the chloroplast. The chain is Large ribosomal subunit protein uL16c from Cyanidium caldarium (Red alga).